The sequence spans 261 residues: Phosphatidylglycerol--prolipoprotein diacylglyceryl transferase (261 aa).

4 helical membrane-spanning segments follow: residues 17–37 (FGIH…LWLG), 60–80 (ALFY…ALFY), 92–112 (ILFL…VMVA), and 121–141 (GLTF…GLGA). Arg-143 is an a 1,2-diacyl-sn-glycero-3-phospho-(1'-sn-glycerol) binding site. 3 consecutive transmembrane segments (helical) span residues 175–195 (PSQL…LWWY), 203–223 (GSVS…VEFT), and 237–257 (LSMG…LLIV).

Belongs to the Lgt family.

It is found in the cell inner membrane. It carries out the reaction L-cysteinyl-[prolipoprotein] + a 1,2-diacyl-sn-glycero-3-phospho-(1'-sn-glycerol) = an S-1,2-diacyl-sn-glyceryl-L-cysteinyl-[prolipoprotein] + sn-glycerol 1-phosphate + H(+). The protein operates within protein modification; lipoprotein biosynthesis (diacylglyceryl transfer). Catalyzes the transfer of the diacylglyceryl group from phosphatidylglycerol to the sulfhydryl group of the N-terminal cysteine of a prolipoprotein, the first step in the formation of mature lipoproteins. The polypeptide is Phosphatidylglycerol--prolipoprotein diacylglyceryl transferase (Methylobacillus flagellatus (strain ATCC 51484 / DSM 6875 / VKM B-1610 / KT)).